The sequence spans 3411 residues: Genome polyprotein (3411 aa).

Residues 1–104 (MSGRKAQGKT…LSSRKRRSHD (104 aa)) lie on the Cytoplasmic side of the membrane. Residues 38–72 (PGPSRGVQGFISFFSFNILTGKKITAHLKRLWKML) are hydrophobic; homodimerization of capsid protein C. The propeptide at 102-121 (SHDVLTVQFLILGMLLMAGG) is ER anchor for the capsid protein C, removed in mature form by serine protease NS3. A helical transmembrane segment spans residues 105 to 125 (VLTVQFLILGMLLMAGGVTLV). Residues 126-244 (RKNRWLLLNV…GERQLQKIER (119 aa)) lie on the Extracellular side of the membrane. N-linked (GlcNAc...) asparagine; by host glycans are attached at residues Asn134 and Asn150. A helical transmembrane segment spans residues 245–265 (WLVRNPFFAVTALAIAYLVGS). The Cytoplasmic segment spans residues 266 to 270 (NMTQR). The chain crosses the membrane as a helical span at residues 271–285 (VVIALLVLAVGPAYS). The Extracellular segment spans residues 286 to 730 (AHCIGITDRD…TVFGSAFQGL (445 aa)). 8 cysteine pairs are disulfide-bonded: Cys288-Cys315, Cys345-Cys401, Cys345-Cys406, Cys359-Cys390, Cys377-Cys401, Cys377-Cys406, Cys467-Cys568, and Cys585-Cys615. Residues 383–396 (DRGWGNGCGLFGKG) form a fusion peptide region. Residues 731–751 (FGGLSWITKVIMGAVLIWVGI) form a helical membrane-spanning segment. Residues 752–757 (NTRNMT) lie on the Extracellular side of the membrane. The helical transmembrane segment at 758–778 (MSMSMILVGVIMMFLSLGVGA) threads the bilayer. At 779–1132 (DQGCAINFGK…LVRSWVTAGE (354 aa)) the chain is on the extracellular side. Disulfide bonds link Cys782/Cys793, Cys833/Cys921, Cys957/Cys1002, Cys1058/Cys1107, Cys1069/Cys1091, and Cys1090/Cys1094. Residues Asn908 and Asn986 are each glycosylated (N-linked (GlcNAc...) asparagine; by host). A helical membrane pass occupies residues 1133–1153 (IHAVPFGLVSMMIAMEVVLRK). Residues 1154 to 1201 (RQGPKQMLVGGMVLLGAMLVGQVTLLDLLKLTMAVGLHFHEMNNGGDA) are Cytoplasmic-facing. The helical transmembrane segment at 1202 to 1222 (MYMALIAAFSIRPGLLIGFGL) threads the bilayer. Topologically, residues 1223-1287 (RTLWSPRERL…ILPLMALLTP (65 aa)) are lumenal. A helical transmembrane segment spans residues 1288 to 1308 (VTMAEVRLATMLLCAVVIIGV). Over 1309–1355 (LHQNSKDTSMQKTIPLVALTLTSYLGLTQPFLGLCAFLATRIFGRRS) the chain is Cytoplasmic. A helical transmembrane segment spans residues 1356 to 1376 (IPVNEALAAAGLVGVLAGLAF). At 1377 to 1378 (QE) the chain is on the lumenal side. A helical transmembrane segment spans residues 1379-1399 (MENFLGPIAVGGILMMLVSVA). Residues 1400 to 1456 (GRVDGLELKKLGEVSWEEEAEISGSSARYDVALSEQGEFKLLSEEKVPWDQVVMTSL) lie on the Cytoplasmic side of the membrane. Residues 1407–1446 (LKKLGEVSWEEEAEISGSSARYDVALSEQGEFKLLSEEKV) are interacts with and activates NS3 protease. The segment at residues 1457–1477 (ALVGAAIHPSALLLVLAGWLF) is an intramembrane region (helical). Over 1478 to 2157 (HVKGARRSGD…RNALSMMPEA (680 aa)) the chain is Cytoplasmic. A Peptidase S7 domain is found at 1485-1665 (SGDVLWDIPT…EVKEEGKEEL (181 aa)). Catalysis depends on charge relay system; for serine protease NS3 activity residues His1537, Asp1561, and Ser1622. In terms of domain architecture, Helicase ATP-binding spans 1669–1825 (PTMLKKGMTT…HSNGEIEDVQ (157 aa)). An important for RNA-binding region spans residues 1673–1676 (KKGM). Residue 1682 to 1689 (YHPGAGKT) coordinates ATP. Positions 1773-1776 (DEAH) match the DEAH box motif. The Helicase C-terminal domain occupies 1820–1997 (EIEDVQTDIP…VRGGMVAPLY (178 aa)). Lys1877 bears the N6-acetyllysine; by host mark. A helical membrane pass occupies residues 2158–2178 (MTIVMLFILAGLLTSGMVIFF). At 2179 to 2186 (MSPKGISR) the chain is on the lumenal side. An intramembrane region (helical) is located at residues 2187-2207 (MSMAMGTMAGCGYLMFLGGAK). The Lumenal portion of the chain corresponds to 2208–2209 (PT). The helical transmembrane segment at 2210 to 2230 (HISYIMLIFFVLMVVVIPEPG) threads the bilayer. The Cytoplasmic segment spans residues 2231–2241 (QQRSIQDNQVA). Residues 2242 to 2262 (YLIIGILTLVSVVAANELGML) form a helical membrane-spanning segment. Residues 2263-2293 (ERTKEDLFGKKNLIPSSASPWSWPDLDLKPG) lie on the Lumenal side of the membrane. An intramembrane region (helical) is located at residues 2294–2314 (AAWTVYVGIVTILSPMLHHWI). Over 2315 to 2360 (KVEYGNLSLSGIAQSASVLSFMDKGIPFMKMNISVIILLVSGWNSI) the chain is Lumenal. A helical membrane pass occupies residues 2361 to 2380 (TVMPLLCGIGCAMLHWTLIL). Topologically, residues 2381-2421 (PGIKAQQSKLPQRRVFHGVAKNPVVDGNPTVDIEEAPEMPA) are cytoplasmic. The helical transmembrane segment at 2422–2442 (LYEKKLALYLLLALSLASVAM) threads the bilayer. Residues 2443–2445 (CRT) lie on the Lumenal side of the membrane. A helical transmembrane segment spans residues 2446 to 2466 (PFSLAEGIVLASAALGPLIEG). Residues 2467–3411 (NTSLLWNGPM…DADLQPGELI (945 aa)) lie on the Cytoplasmic side of the membrane. One can recognise an mRNA cap 0-1 NS5-type MT domain in the interval 2507-2771 (GRANGKTLGE…DVILPIGTRS (265 aa)). Residue Ser2562 participates in S-adenosyl-L-methionine binding. Ser2562 is subject to Phosphoserine. Lys2567 acts as the For 2'-O-MTase activity in catalysis. S-adenosyl-L-methionine-binding residues include Gly2592, Trp2593, Thr2610, Leu2611, Asp2637, and Ile2638. Residue Asp2652 is the For 2'-O-MTase activity of the active site. Ile2653 serves as a coordination point for S-adenosyl-L-methionine. Active-site for 2'-O-MTase activity residues include Lys2688 and Glu2724. Tyr2726 contacts S-adenosyl-L-methionine. A Nuclear localization signal motif is present at residues 2878–2911 (RKIMKVVNRWLFRHLAREKNPRLCTKEEFIAKVR). Zn(2+) is bound by residues Glu2945, His2949, Cys2954, and Cys2957. A RdRp catalytic domain is found at 3035-3187 (GGFYADDTAG…RPIDDRFGMA (153 aa)). Zn(2+)-binding residues include His3222, Cys3238, and Cys3357.

This sequence in the N-terminal section; belongs to the class I-like SAM-binding methyltransferase superfamily. mRNA cap 0-1 NS5-type methyltransferase family. Homodimer. Interacts (via N-terminus) with host EXOC1 (via C-terminus); this interaction results in EXOC1 degradation through the proteasome degradation pathway. As to quaternary structure, forms heterodimers with envelope protein E in the endoplasmic reticulum and Golgi. In terms of assembly, homodimer; in the endoplasmic reticulum and Golgi. Interacts with protein prM. Interacts with non-structural protein 1. Homodimer; Homohexamer when secreted. Interacts with envelope protein E. As to quaternary structure, interacts (via N-terminus) with serine protease NS3. In terms of assembly, forms a heterodimer with serine protease NS3. May form homooligomers. Forms a heterodimer with NS2B. Interacts with non-structural protein 2A (via N-terminus). Interacts with NS4B. Interacts with unphosphorylated RNA-directed RNA polymerase NS5; this interaction stimulates RNA-directed RNA polymerase NS5 guanylyltransferase activity. NS3 interacts with host PDCD6IP; this interaction contributes to virion release. As to quaternary structure, interacts with serine protease NS3. In terms of assembly, homodimer. Interacts with host STAT2; this interaction prevents the establishment of cellular antiviral state. Interacts with serine protease NS3. Interacts with host TRIM23; this interaction leads to NS5 ubiquitination. Post-translationally, specific enzymatic cleavages in vivo yield mature proteins. The nascent capsid protein C contains a C-terminal hydrophobic domain that act as a signal sequence for translocation of prM into the lumen of the ER. Mature capsid protein C is cleaved at a site upstream of this hydrophobic domain by NS3. prM is cleaved in post-Golgi vesicles by a host furin, releasing the mature small envelope protein M, and peptide pr. Non-structural protein 2A-alpha, a C-terminally truncated form of non-structural protein 2A, results from partial cleavage by NS3. Specific enzymatic cleavages in vivo yield mature proteins peptide 2K acts as a signal sequence and is removed from the N-terminus of NS4B by the host signal peptidase in the ER lumen. Signal cleavage at the 2K-4B site requires a prior NS3 protease-mediated cleavage at the 4A-2K site. Cleaved in post-Golgi vesicles by a host furin, releasing the mature small envelope protein M, and peptide pr. This cleavage is incomplete as up to 30% of viral particles still carry uncleaved prM. In terms of processing, N-glycosylated. Post-translationally, N-glycosylated. The excreted form is glycosylated and this is required for efficient secretion of the protein from infected cells. Polyubiquitinated; ubiquitination is probably mediated by host TRIM23 and is prerequisite for NS5-STAT2 interaction. NS5 is not ISGylated or sumoylated. In terms of processing, acetylated by host KAT5. Acetylation modulates NS3 RNA-binding and unwinding activities and plays an important positive role for viral replication. Post-translationally, phosphorylated on serines residues. This phosphorylation may trigger NS5 nuclear localization.

Its subcellular location is the virion. It localises to the host nucleus. The protein localises to the host cytoplasm. The protein resides in the host perinuclear region. It is found in the secreted. Its subcellular location is the virion membrane. It localises to the host endoplasmic reticulum membrane. The enzyme catalyses Selective hydrolysis of -Xaa-Xaa-|-Yaa- bonds in which each of the Xaa can be either Arg or Lys and Yaa can be either Ser or Ala.. The catalysed reaction is RNA(n) + a ribonucleoside 5'-triphosphate = RNA(n+1) + diphosphate. It catalyses the reaction a ribonucleoside 5'-triphosphate + H2O = a ribonucleoside 5'-diphosphate + phosphate + H(+). It carries out the reaction ATP + H2O = ADP + phosphate + H(+). The enzyme catalyses a 5'-end (5'-triphosphoguanosine)-ribonucleoside in mRNA + S-adenosyl-L-methionine = a 5'-end (N(7)-methyl 5'-triphosphoguanosine)-ribonucleoside in mRNA + S-adenosyl-L-homocysteine. The catalysed reaction is a 5'-end (N(7)-methyl 5'-triphosphoguanosine)-ribonucleoside in mRNA + S-adenosyl-L-methionine = a 5'-end (N(7)-methyl 5'-triphosphoguanosine)-(2'-O-methyl-ribonucleoside) in mRNA + S-adenosyl-L-homocysteine + H(+). Plays a role in virus budding by binding to the cell membrane and gathering the viral RNA into a nucleocapsid that forms the core of a mature virus particle. During virus entry, may induce genome penetration into the host cytoplasm after hemifusion induced by the surface proteins. Can migrate to the cell nucleus where it modulates host functions. Its function is as follows. Inhibits RNA silencing by interfering with host Dicer. In terms of biological role, prevents premature fusion activity of envelope proteins in trans-Golgi by binding to envelope protein E at pH6.0. After virion release in extracellular space, gets dissociated from E dimers. Functionally, acts as a chaperone for envelope protein E during intracellular virion assembly by masking and inactivating envelope protein E fusion peptide. prM is the only viral peptide matured by host furin in the trans-Golgi network probably to avoid catastrophic activation of the viral fusion activity in acidic Golgi compartment prior to virion release. prM-E cleavage is inefficient, and many virions are only partially matured. These uncleaved prM would play a role in immune evasion. May play a role in virus budding. Exerts cytotoxic effects by activating a mitochondrial apoptotic pathway through M ectodomain. May display a viroporin activity. Its function is as follows. Binds to host cell surface receptor and mediates fusion between viral and cellular membranes. Envelope protein is synthesized in the endoplasmic reticulum in the form of heterodimer with protein prM. They play a role in virion budding in the ER, and the newly formed immature particle is covered with 60 spikes composed of heterodimer between precursor prM and envelope protein E. The virion is transported to the Golgi apparatus where the low pH causes dissociation of PrM-E heterodimers and formation of E homodimers. prM-E cleavage is inefficient, and many virions are only partially matured. These uncleaved prM would play a role in immune evasion. In terms of biological role, involved in immune evasion, pathogenesis and viral replication. Once cleaved off the polyprotein, is targeted to three destinations: the viral replication cycle, the plasma membrane and the extracellular compartment. Essential for viral replication. Required for formation of the replication complex and recruitment of other non-structural proteins to the ER-derived membrane structures. Excreted as a hexameric lipoparticle that plays a role against host immune response. Antagonizing the complement function. Binds to the host macrophages and dendritic cells. Inhibits signal transduction originating from Toll-like receptor 3 (TLR3). Functionally, component of the viral RNA replication complex that functions in virion assembly and antagonizes the host immune response. Required cofactor for the serine protease function of NS3. May have membrane-destabilizing activity and form viroporins. Its function is as follows. Displays three enzymatic activities: serine protease, NTPase and RNA helicase. NS3 serine protease, in association with NS2B, performs its autocleavage and cleaves the polyprotein at dibasic sites in the cytoplasm: C-prM, NS2A-NS2B, NS2B-NS3, NS3-NS4A, NS4A-2K and NS4B-NS5. NS3 RNA helicase binds RNA and unwinds dsRNA in the 3' to 5' direction. Also plays a role in virus assembly. In terms of biological role, regulates the ATPase activity of the NS3 helicase activity. NS4A allows NS3 helicase to conserve energy during unwinding. Functionally, functions as a signal peptide for NS4B and is required for the interferon antagonism activity of the latter. Induces the formation of ER-derived membrane vesicles where the viral replication takes place. Inhibits interferon (IFN)-induced host STAT1 phosphorylation and nuclear translocation, thereby preventing the establishment of cellular antiviral state by blocking the IFN-alpha/beta pathway. Its function is as follows. Replicates the viral (+) and (-) RNA genome, and performs the capping of genomes in the cytoplasm. NS5 methylates viral RNA cap at guanine N-7 and ribose 2'-O positions. Besides its role in RNA genome replication, also prevents the establishment of cellular antiviral state by blocking the interferon-alpha/beta (IFN-alpha/beta) signaling pathway. IFN-I induces binding of NS5 to host IFN-activated transcription factor STAT2, preventing its transcriptional activity. Host TRIM23 is the E3 ligase that interacts with and polyubiquitinates NS5 to promote its binding to STAT2 and trigger IFN-I signaling inhibition. This Yellow fever virus (isolate Ivory Coast/85-82H/1982) (YFV) protein is Genome polyprotein.